Here is a 200-residue protein sequence, read N- to C-terminus: Peptidyl-tRNA hydrolase (200 aa).

TRNA is bound at residue Tyr15. His20 (proton acceptor) is an active-site residue. TRNA contacts are provided by Tyr66, Asn68, and Asn114.

The protein belongs to the PTH family. In terms of assembly, monomer.

Its subcellular location is the cytoplasm. The enzyme catalyses an N-acyl-L-alpha-aminoacyl-tRNA + H2O = an N-acyl-L-amino acid + a tRNA + H(+). In terms of biological role, hydrolyzes ribosome-free peptidyl-tRNAs (with 1 or more amino acids incorporated), which drop off the ribosome during protein synthesis, or as a result of ribosome stalling. Catalyzes the release of premature peptidyl moieties from peptidyl-tRNA molecules trapped in stalled 50S ribosomal subunits, and thus maintains levels of free tRNAs and 50S ribosomes. This chain is Peptidyl-tRNA hydrolase, found in Paraburkholderia phymatum (strain DSM 17167 / CIP 108236 / LMG 21445 / STM815) (Burkholderia phymatum).